The sequence spans 339 residues: Ketol-acid reductoisomerase (NADP(+)) (339 aa).

The KARI N-terminal Rossmann domain maps to 1-182 (MKIYYEKDAD…GNTRAGVIET (182 aa)). NADP(+) contacts are provided by residues 24–27 (YGSQ), S51, S53, and 83–86 (DEKQ). Residue H108 is part of the active site. Position 134 (G134) interacts with NADP(+). In terms of domain architecture, KARI C-terminal knotted spans 183–328 (SFREETETDL…EKLRGMMHWA (146 aa)). The Mg(2+) site is built by D191, E195, E227, and E231. S252 is a binding site for substrate.

It belongs to the ketol-acid reductoisomerase family. Mg(2+) is required as a cofactor.

It carries out the reaction (2R)-2,3-dihydroxy-3-methylbutanoate + NADP(+) = (2S)-2-acetolactate + NADPH + H(+). It catalyses the reaction (2R,3R)-2,3-dihydroxy-3-methylpentanoate + NADP(+) = (S)-2-ethyl-2-hydroxy-3-oxobutanoate + NADPH + H(+). Its pathway is amino-acid biosynthesis; L-isoleucine biosynthesis; L-isoleucine from 2-oxobutanoate: step 2/4. The protein operates within amino-acid biosynthesis; L-valine biosynthesis; L-valine from pyruvate: step 2/4. Functionally, involved in the biosynthesis of branched-chain amino acids (BCAA). Catalyzes an alkyl-migration followed by a ketol-acid reduction of (S)-2-acetolactate (S2AL) to yield (R)-2,3-dihydroxy-isovalerate. In the isomerase reaction, S2AL is rearranged via a Mg-dependent methyl migration to produce 3-hydroxy-3-methyl-2-ketobutyrate (HMKB). In the reductase reaction, this 2-ketoacid undergoes a metal-dependent reduction by NADPH to yield (R)-2,3-dihydroxy-isovalerate. In Hyphomonas neptunium (strain ATCC 15444), this protein is Ketol-acid reductoisomerase (NADP(+)).